The following is a 130-amino-acid chain: Small ribosomal subunit protein uS8 (130 aa).

The protein belongs to the universal ribosomal protein uS8 family. In terms of assembly, part of the 30S ribosomal subunit. Contacts proteins S5 and S12.

Functionally, one of the primary rRNA binding proteins, it binds directly to 16S rRNA central domain where it helps coordinate assembly of the platform of the 30S subunit. The chain is Small ribosomal subunit protein uS8 from Wigglesworthia glossinidia brevipalpis.